We begin with the raw amino-acid sequence, 214 residues long: MGQKTHPLGFRLGITQEHRSAWYANFNQYANLLKEDNQIRTYLNKLAKTASISNIQINRNGLSDQIQLNIETGRPGVLVGENGTGIKTLLSNIKKILPPNRQLTINIIEVEKVNLNASLIGDLVVEQLEDRVAFRKAIRKAMQSALDENVNGIKIQVSGRLNGAEIARSEWIREGRVPLQTLRADIDYATKEAHTIYGVLGVKVWLFKSEILAK.

In terms of domain architecture, KH type-2 spans 39–111; the sequence is IRTYLNKLAK…QLTINIIEVE (73 aa).

Belongs to the universal ribosomal protein uS3 family. Part of the 30S ribosomal subunit.

It is found in the plastid. The protein resides in the chloroplast. This chain is Small ribosomal subunit protein uS3c (rps3), found in Trieres chinensis (Marine centric diatom).